The sequence spans 232 residues: Chaperone protein CssC (232 aa).

The N-terminal stretch at Met-1–Gly-20 is a signal peptide.

This sequence belongs to the periplasmic pilus chaperone family.

The protein resides in the periplasm. Involved in the biogenesis of the CS6 fimbria. This Escherichia coli protein is Chaperone protein CssC (cssC).